A 1090-amino-acid polypeptide reads, in one-letter code: Protein transport protein Sec24A (1090 aa).

Disordered stretches follow at residues Met-1–Thr-260 and Thr-272–Pro-325. Residues Ala-8–Ser-28 are compositionally biased toward low complexity. Polar residues-rich tracts occupy residues Pro-29–Pro-55, Trp-138–His-151, and Gly-162–Phe-184. Positions Gln-194 to Ser-236 are enriched in pro residues. 3 stretches are compositionally biased toward polar residues: residues Phe-237 to His-258, Gln-274 to Val-286, and Ser-313 to Pro-325. Zn(2+) is bound by residues Cys-428, Cys-431, Cys-449, and Cys-452. The interval Cys-428 to Cys-452 is zinc finger-like. A Gelsolin-like repeat occupies Pro-963 to Ile-1036.

Belongs to the SEC23/SEC24 family. SEC24 subfamily. COPII is composed of at least five proteins: the Sec23/24 complex, the Sec13/31 complex and Sar1. Interacts with TMED2. Interacts (as part of the Sec23/24 complex) with SEC22B; recruits SEC22B into COPII-coated vesicles for its transport from the endoplasmic reticulum to the Golgi. Interacts with STING1; promoting STING1 translocation to COPII vesicles in a STEEP1-dependent manner. Interacts with TMEM39A. Interacts with SACM1L; this interaction is reduced in the absence of TMEM39A. Interacts with kinase FAM20C; transport of FAM20C from the endoplasmic reticulum to the Golgi is likely to be mediated by COPII vesicles.

Its subcellular location is the cytoplasmic vesicle. The protein resides in the COPII-coated vesicle membrane. The protein localises to the endoplasmic reticulum membrane. It is found in the cytoplasm. It localises to the cytosol. In terms of biological role, component of the coat protein complex II (COPII) which promotes the formation of transport vesicles from the endoplasmic reticulum (ER). The coat has two main functions, the physical deformation of the endoplasmic reticulum membrane into vesicles and the selection of cargo molecules for their transport to the Golgi complex. Plays a central role in cargo selection within the COPII complex and together with SEC24B may have a different specificity compared to SEC24C and SEC24D. May package preferentially cargos with cytoplasmic DxE or LxxLE motifs and may also recognize conformational epitopes. This Mus musculus (Mouse) protein is Protein transport protein Sec24A.